A 95-amino-acid chain; its full sequence is Integration host factor subunit beta (95 aa).

The protein belongs to the bacterial histone-like protein family. Heterodimer of an alpha and a beta chain.

This protein is one of the two subunits of integration host factor, a specific DNA-binding protein that functions in genetic recombination as well as in transcriptional and translational control. This chain is Integration host factor subunit beta, found in Shewanella sp. (strain ANA-3).